A 351-amino-acid chain; its full sequence is Nicotinate-nucleotide--dimethylbenzimidazole phosphoribosyltransferase (351 aa).

The active-site Proton acceptor is E317.

This sequence belongs to the CobT family.

The enzyme catalyses 5,6-dimethylbenzimidazole + nicotinate beta-D-ribonucleotide = alpha-ribazole 5'-phosphate + nicotinate + H(+). It participates in nucleoside biosynthesis; alpha-ribazole biosynthesis; alpha-ribazole from 5,6-dimethylbenzimidazole: step 1/2. Catalyzes the synthesis of alpha-ribazole-5'-phosphate from nicotinate mononucleotide (NAMN) and 5,6-dimethylbenzimidazole (DMB). The protein is Nicotinate-nucleotide--dimethylbenzimidazole phosphoribosyltransferase of Pseudomonas putida (strain ATCC 47054 / DSM 6125 / CFBP 8728 / NCIMB 11950 / KT2440).